The primary structure comprises 438 residues: High-affinity gluconate transporter (438 aa).

The next 13 helical transmembrane spans lie at 2–22 (PLVI…RFKM), 23–43 (NGFI…GMPL), 52–72 (AGVG…AMLG), 108–128 (VGFA…VFTI), 134–154 (IPLL…HGFL), 174–194 (TLLY…PVYA), 222–242 (FGVS…RAIA), 258–278 (FLGD…FTFG), 292–312 (LVSS…GGAF), 327–347 (SMMH…AAVL), 349–369 (IALG…APLI), 370–390 (ATTG…SVIF), and 418–438 (MLET…NMVI).

It belongs to the GntP permease family.

Its subcellular location is the cell inner membrane. It participates in carbohydrate acid metabolism; D-gluconate degradation. Functionally, part of the gluconate utilization system Gnt-I; high-affinity intake of gluconate. This is High-affinity gluconate transporter (gntT) from Escherichia coli (strain K12).